The following is a 246-amino-acid chain: Pyridoxine 5'-phosphate synthase (246 aa).

3-amino-2-oxopropyl phosphate is bound at residue Asn12. 14 to 15 (DH) contacts 1-deoxy-D-xylulose 5-phosphate. A 3-amino-2-oxopropyl phosphate-binding site is contributed by Arg23. His48 (proton acceptor) is an active-site residue. Residues Arg50 and His55 each contribute to the 1-deoxy-D-xylulose 5-phosphate site. Glu75 serves as the catalytic Proton acceptor. Thr105 contacts 1-deoxy-D-xylulose 5-phosphate. The Proton donor role is filled by His196. 3-amino-2-oxopropyl phosphate is bound by residues Gly197 and 218–219 (GH).

The protein belongs to the PNP synthase family. In terms of assembly, homooctamer; tetramer of dimers.

The protein resides in the cytoplasm. The enzyme catalyses 3-amino-2-oxopropyl phosphate + 1-deoxy-D-xylulose 5-phosphate = pyridoxine 5'-phosphate + phosphate + 2 H2O + H(+). Its pathway is cofactor biosynthesis; pyridoxine 5'-phosphate biosynthesis; pyridoxine 5'-phosphate from D-erythrose 4-phosphate: step 5/5. In terms of biological role, catalyzes the complicated ring closure reaction between the two acyclic compounds 1-deoxy-D-xylulose-5-phosphate (DXP) and 3-amino-2-oxopropyl phosphate (1-amino-acetone-3-phosphate or AAP) to form pyridoxine 5'-phosphate (PNP) and inorganic phosphate. The protein is Pyridoxine 5'-phosphate synthase of Thiobacillus denitrificans (strain ATCC 25259 / T1).